The chain runs to 655 residues: MGIFSIANQHIRFAVKLASAIVLTLFVGFHFQLETPRWAVLTAAIVAAGPAFAAGGEPYAGAIRYRGMLRIIGTFIGCIAGLVIIIAMIRAPLLMILVCCIWAGFCTWISSLVRVENSYAWGLAGYTALIIVITIQPEPLLTPQFALERCSEIVVGIVCAIVADLIFSPRSIKQEVDRELDSLLVAQYQLMQLCIKHGEAEEVDKAWGNLVRRTTALEGMRSNLNMESSRWARANRRLKALNTLSLTLITQSCETYLIQNTRPELITETFREFFSTPVETAQDVHKQLKRLRRVIAWTGERETPVTIYSWAGAATRYLLIKRGVISNTKISATEEEILQGEPVVKAESAERHHAMVNFWRTTISCVLGTLFWLWTGWTSGSGAMVMIAVVTSLAMRLPNPRMVGIDFIYGTLAALPLGLLYFLVIIPNTQQSMLLLCLSLAVLGFFLGIEVQKRRLGSMGALASTINIIVLDNPMKFEFSLFLDSALGQIVGCVLAFTVILLVRDKSRDRTGRVLLNQFVSAAISAMTTNVVRRKENHLPALYQQLFLLMNKFPGDLPKFRLALTMIIAHQRLRDAPVPINDDLSAFHRQMRRTADKVISARSDDKRRKYFSQLLEELEIYQEKLRIWHAPPQVTEPVKRLSGMLHKYQHALTSS.

10 helical membrane passes run 13-33, 38-58, 69-89, 93-113, 121-141, 152-172, 370-390, 407-427, 431-451, and 481-501; these read FAVK…HFQL, WAVL…GGEP, LRII…IAMI, LLMI…SSLV, WGLA…EPLL, EIVV…PRSI, LFWL…IAVV, FIYG…VIIP, QSML…GIEV, and LFLD…TVIL.

Belongs to the aromatic acid exporter ArAE (TC 2.A.85) family.

The protein resides in the cell inner membrane. Forms an efflux pump with AaeA. Could function as a metabolic relief valve, allowing to eliminate certain compounds when they accumulate to high levels in the cell. This Escherichia fergusonii (strain ATCC 35469 / DSM 13698 / CCUG 18766 / IAM 14443 / JCM 21226 / LMG 7866 / NBRC 102419 / NCTC 12128 / CDC 0568-73) protein is p-hydroxybenzoic acid efflux pump subunit AaeB.